A 526-amino-acid chain; its full sequence is Dolichyl pyrophosphate Glc1Man9GlcNAc2 alpha-1,3-glucosyltransferase (526 aa).

A run of 11 helical transmembrane segments spans residues Ala9–Ile29, Phe108–Ile128, Phe143–Phe163, Gly188–Ala208, Val238–Ala258, Pro334–Phe354, Gly361–Val380, Ala400–Phe422, Leu427–Phe449, Thr461–Thr481, and Tyr487–Trp507.

The protein belongs to the ALG6/ALG8 glucosyltransferase family.

Its subcellular location is the endoplasmic reticulum membrane. It carries out the reaction an alpha-D-Glc-(1-&gt;3)-alpha-D-Man-(1-&gt;2)-alpha-D-Man-(1-&gt;2)-alpha-D-Man-(1-&gt;3)-[alpha-D-Man-(1-&gt;2)-alpha-D-Man-(1-&gt;3)-[alpha-D-Man-(1-&gt;2)-alpha-D-Man-(1-&gt;6)]-alpha-D-Man-(1-&gt;6)]-beta-D-Man-(1-&gt;4)-beta-D-GlcNAc-(1-&gt;4)-alpha-D-GlcNAc-diphospho-di-trans,poly-cis-dolichol + a di-trans,poly-cis-dolichyl beta-D-glucosyl phosphate = an alpha-D-Glc-(1-&gt;3)-alpha-D-Glc-(1-&gt;3)-alpha-D-Man-(1-&gt;2)-alpha-D-Man-(1-&gt;2)-alpha-D-Man-(1-&gt;3)-[alpha-D-Man-(1-&gt;2)-alpha-D-Man-(1-&gt;3)-[alpha-D-Man-(1-&gt;2)-alpha-D-Man-(1-&gt;6)]-alpha-D-Man-(1-&gt;6)]-beta-D-Man-(1-&gt;4)-beta-D-GlcNAc-(1-&gt;4)-alpha-D-GlcNAc-diphospho-di-trans,poly-cis-dolichol + a di-trans,poly-cis-dolichyl phosphate + H(+). The protein operates within protein modification; protein glycosylation. Its function is as follows. Dolichyl pyrophosphate Glc1Man9GlcNAc2 alpha-1,3-glucosyltransferase that operates in the biosynthetic pathway of dolichol-linked oligosaccharides, the glycan precursors employed in protein asparagine (N)-glycosylation. The assembly of dolichol-linked oligosaccharides begins on the cytosolic side of the endoplasmic reticulum membrane and finishes in its lumen. The sequential addition of sugars to dolichol pyrophosphate produces dolichol-linked oligosaccharides containing fourteen sugars, including two GlcNAcs, nine mannoses and three glucoses. Once assembled, the oligosaccharide is transferred from the lipid to nascent proteins by oligosaccharyltransferases. In the lumen of the endoplasmic reticulum, adds the second glucose residue from dolichyl phosphate glucose (Dol-P-Glc) onto the lipid-linked oligosaccharide intermediate Glc(1)Man(9)GlcNAc(2)-PP-Dol to produce Glc(2)Man(9)GlcNAc(2)-PP-Dol. Glc(2)Man(9)GlcNAc(2)-PP-Dol is a substrate for ALG10, the following enzyme in the biosynthetic pathway. Required for PKD1/Polycystin-1 maturation and localization to the plasma membrane of the primary cilia. The protein is Dolichyl pyrophosphate Glc1Man9GlcNAc2 alpha-1,3-glucosyltransferase of Mus musculus (Mouse).